A 381-amino-acid chain; its full sequence is Choline transport ATP-binding protein OpuBA (381 aa).

The 235-residue stretch at L2 to I236 folds into the ABC transporter domain. G35–T42 contacts ATP. CBS domains lie at M256–E314 and L316–E374.

Belongs to the ABC transporter superfamily.

Involved in a high affinity multicomponent binding-protein-dependent transport system for choline. Probably responsible for energy coupling to the transport system. The chain is Choline transport ATP-binding protein OpuBA (opuBA) from Bacillus subtilis (strain 168).